Consider the following 276-residue polypeptide: 3-methyl-2-oxobutanoate hydroxymethyltransferase (276 aa).

D45 and D84 together coordinate Mg(2+). Residues 45–46 (DS), D84, and K114 each bind 3-methyl-2-oxobutanoate. E116 lines the Mg(2+) pocket. Catalysis depends on E183, which acts as the Proton acceptor.

The protein belongs to the PanB family. Homodecamer; pentamer of dimers. It depends on Mg(2+) as a cofactor.

Its subcellular location is the cytoplasm. The enzyme catalyses 3-methyl-2-oxobutanoate + (6R)-5,10-methylene-5,6,7,8-tetrahydrofolate + H2O = 2-dehydropantoate + (6S)-5,6,7,8-tetrahydrofolate. The protein operates within cofactor biosynthesis; (R)-pantothenate biosynthesis; (R)-pantoate from 3-methyl-2-oxobutanoate: step 1/2. In terms of biological role, catalyzes the reversible reaction in which hydroxymethyl group from 5,10-methylenetetrahydrofolate is transferred onto alpha-ketoisovalerate to form ketopantoate. In Syntrophomonas wolfei subsp. wolfei (strain DSM 2245B / Goettingen), this protein is 3-methyl-2-oxobutanoate hydroxymethyltransferase.